A 341-amino-acid chain; its full sequence is uncharacterized protein (341 aa).

A run of 4 helical transmembrane segments spans residues 8 to 28 (LMLT…PLII), 63 to 83 (LMYF…VFAL), 171 to 191 (IYIM…IALS), and 317 to 337 (EFLV…KIFL). Positions 101–305 (DIVIVLDISP…SKKENLERKI (205 aa)) constitute a VWFA domain.

The protein localises to the cell membrane. This is an uncharacterized protein from Borreliella burgdorferi (strain ATCC 35210 / DSM 4680 / CIP 102532 / B31) (Borrelia burgdorferi).